The following is an 88-amino-acid chain: Phosphocarrier protein HPr (88 aa).

Residues 1–88 (MEQKSYVIID…DILSKEGLTK (88 aa)) form the HPr domain. The Pros-phosphohistidine intermediate role is filled by His15. Ser46 is modified (phosphoserine; by HPrK/P).

Belongs to the HPr family.

It is found in the cytoplasm. Phosphorylation on Ser-46 inhibits the phosphoryl transfer from enzyme I to HPr. In terms of biological role, general (non sugar-specific) component of the phosphoenolpyruvate-dependent sugar phosphotransferase system (sugar PTS). This major carbohydrate active-transport system catalyzes the phosphorylation of incoming sugar substrates concomitantly with their translocation across the cell membrane. The phosphoryl group from phosphoenolpyruvate (PEP) is transferred to the phosphoryl carrier protein HPr by enzyme I. Phospho-HPr then transfers it to the PTS EIIA domain. This chain is Phosphocarrier protein HPr (ptsH), found in Staphylococcus xylosus.